Here is a 967-residue protein sequence, read N- to C-terminus: MQDPASHSDSLVGRVEVKETTCYMCACRCGIRVHLRDGEVRYIDGNPNHPLNKGVICAKGSSGIMKQYSPGRLTQPLRRKAGAERGESAFEVISWDEAFAMLEERLAKLRAEDPKKFALFTGRDQMQALTGLFAKQYGTPNYAAHGGFCSVNMAAGLIYTIGGSFWEFGGPDLERAKLFVMIGTAEDHHSNPLKMAISEFKRRGGRFISVNPVRTGYSAVADEWVPIKPGTDGALLLAITREILDKGLFDRDFLVRYTNAAELVIDDPSRDDHGLFYRAEMHVEPDCFDPQNKLWWDRDIDGPISTHTPGADPRLMGRYVLPDGTPVKPSFQLLKERLEQYTPEWAAPITGIPADTIRRLAHEMGVMARDQKIELPIKWTDCWDDEHESVTGNPVAFHAMRGLAAHSNGFQTIRALGVLMTVLGTIDRPGGFRHKAPYPRPIPPCPKPPHGPEAVQPNTPLDGMPLGWPSKPEDLFVDAEGEAVRLDKAFSWEYPLSVHGLMHNVITNAWRGDPYPIDTLFLFMANMAWNSTMNTVEVRKMLVDKHPNGDYKIPFLVVCDTFASETVAFADLVLPDTSYLERHDVLSMLDRPISEFDGPVDSVRIPVLPPKGECKPFQEVLVELGSRLKLPAFTNADGSRKYRNYPDFIVNYETSPGSGIGFLAGWRGKGGDQFLKGEPNPHQWEMYAQNNCVYHHELPRSYQYMRNWNKGYLHWARAHGMIRYAEPITLHLYSEVLQRFRLAAQGKRPGRQPPERLRQRVETYFDPLPFYYEPLESRFTDTQRYPLNALTQRPMAMYHSWDSQNAWLRQIHSHNYLFLSPKVGLAQGFADGDWVWVESPHGKVRCMCRFSEAVEPGTVWTWNAIGKGAGAWGLAPNADEARKGFLLNHVIAEELPAHEAGEHLSNSDPVTGQAAWFDVRVRVYKAEAGEPEVTSPQFKPMPRLPGQEKKRGKWQAYVAGIFGKQAS.

One can recognise a 4Fe-4S Mo/W bis-MGD-type domain in the interval 15-71 (VEVKETTCYMCACRCGIRVHLRDGEVRYIDGNPNHPLNKGVICAKGSSGIMKQYSPG). The [4Fe-4S] cluster site is built by Cys22, Cys25, Cys29, and Cys57.

This sequence belongs to the prokaryotic molybdopterin-containing oxidoreductase family. As to quaternary structure, forms a heterotrimeric membrane-bound complex composed of a catalytic heterodimer (SoeAB) and a membrane anchor protein (SoeC). The cofactor is [4Fe-4S] cluster. Mo-bis(molybdopterin guanine dinucleotide) is required as a cofactor.

It localises to the cell inner membrane. It carries out the reaction a quinone + sulfite + H2O = a quinol + sulfate. The enzyme catalyses a menaquinone + sulfite + H2O = a menaquinol + sulfate. Functionally, part of the SoeABC complex that catalyzes the oxidation of sulfite to sulfate. The chain is Sulfite dehydrogenase subunit A from Allochromatium vinosum (strain ATCC 17899 / DSM 180 / NBRC 103801 / NCIMB 10441 / D) (Chromatium vinosum).